The sequence spans 271 residues: Fatty acid elongase 2 (271 aa).

The helical transmembrane segment at 16 to 36 threads the bilayer; it reads WMIDNVDVAGFLCLLYLGLVW. A glycan (N-linked (GlcNAc...) asparagine) is linked at asparagine 52. The next 2 helical transmembrane spans lie at 59–79 and 110–130; these read VFIM…IVVV and FWVG…VLLV. Positions 140-144 match the HxxHH motif motif; it reads HWYHH. The Nucleophile role is filled by histidine 143. 3 consecutive transmembrane segments (helical) span residues 162–182, 194–214, and 241–261; these read IFVF…YFAM, IAPV…AVTM, and GVVM…ESYL.

This sequence belongs to the ELO family.

Its subcellular location is the endoplasmic reticulum membrane. The catalysed reaction is an acyl-CoA + malonyl-CoA + H(+) = a 3-oxoacyl-CoA + CO2 + CoA. The protein operates within lipid metabolism; fatty acid biosynthesis. Involved in the synthesis of fatty acids. Elongates C10 fatty acids to C14. This Trypanosoma brucei brucei (strain 927/4 GUTat10.1) protein is Fatty acid elongase 2.